Here is a 154-residue protein sequence, read N- to C-terminus: Mediator of RNA polymerase II transcription subunit 21 (154 aa).

Residues 37 to 71 (GFERTGSQTPQQQVHQQQQLPQQQQQQQQPQQQED) form a disordered region. Residues 44 to 71 (QTPQQQVHQQQQLPQQQQQQQQPQQQED) show a composition bias toward low complexity. The stretch at 96–140 (SEESSIELQVQSLQRLEAENKESAEKLEEIVRKGELLLEKIQAAL) forms a coiled coil.

It belongs to the Mediator complex subunit 21 family. In terms of assembly, component of the Mediator complex.

It localises to the nucleus. Component of the Mediator complex, a coactivator involved in the regulated transcription of nearly all RNA polymerase II-dependent genes. Mediator functions as a bridge to convey information from gene-specific regulatory proteins to the basal RNA polymerase II transcription machinery. Mediator is recruited to promoters by direct interactions with regulatory proteins and serves as a scaffold for the assembly of a functional preinitiation complex with RNA polymerase II and the general transcription factors. The sequence is that of Mediator of RNA polymerase II transcription subunit 21 (MED21) from Anopheles gambiae (African malaria mosquito).